The sequence spans 113 residues: Vitelline membrane protein Vm32E (113 aa).

Positions 1 to 17 (MKIVAFTLVAFVALAGA) are cleaved as a signal peptide. A VM domain is found at 33–70 (GYPAPPCPTNYLFSCQPNLAPVPCAQQAPAYGSAGAYT).

It belongs to the vitelline membrane family.

The protein resides in the secreted. Major early eggshell protein. This Drosophila erecta (Fruit fly) protein is Vitelline membrane protein Vm32E.